The following is an 89-amino-acid chain: OMEGA-ectatommitoxin(02)-Rm1a (89 aa).

A signal peptide spans 1–30; the sequence is MKDSYISIVIAYLMVTFILVSSMPIEGEKG. Cystine bridges form between C39/C52, C47/C68, and C70/C79. Residues 43 to 80 enclose the EGF-like domain; sequence YANYCFNGKCVHVVAQDEPGKPCYSCICDKFYIGKRCG.

It belongs to the EGF domain peptide family. In terms of tissue distribution, expressed by the venom gland.

It is found in the secreted. Ant peptide with probable defensive activity which acts as a potent agonist of the mammalian epidermal growth factor receptor (EGFR). Mimics, both structurally and functionally, vertebrate epidermal growth factor (EGF) peptide hormones. In vivo, intraplantar injection in mice causes long-lasting (several days) hypersensitivity of the injected paw to both mechanical and thermal stimuli. Its long-lasting effect is unusual for venom toxins whose effects are usually immediate. One possible explanation is that it would reduce the duration of a nest attack, discourage future attacks, or enhance the actions of subsequent exposure to other pain-inducing venom peptides. This is OMEGA-ectatommitoxin(02)-Rm1a from Rhytidoponera metallica (Australian green-headed ant).